The sequence spans 525 residues: Chromosomal replication initiator protein DnaA (525 aa).

The domain I, interacts with DnaA modulators stretch occupies residues 1–71 (MNDFWQHCSA…ADLAREFWNT (71 aa)). The segment at 71 to 188 (TPIEVQFVLD…GEADSMYERS (118 aa)) is domain II. A disordered region spans residues 160 to 182 (AAAGRRTWRPGPGAAPANGGEAD). The span at 169–181 (PGPGAAPANGGEA) shows a compositional bias: low complexity. Residues 189–405 (KLNPVLTFDN…GALRKILAYS (217 aa)) form a domain III, AAA+ region region. Positions 233, 235, 236, and 237 each coordinate ATP. The domain IV, binds dsDNA stretch occupies residues 406–525 (KFHGREISIE…LHVLEQTLKG (120 aa)).

This sequence belongs to the DnaA family. Oligomerizes as a right-handed, spiral filament on DNA at oriC.

It is found in the cytoplasm. In terms of biological role, plays an essential role in the initiation and regulation of chromosomal replication. ATP-DnaA binds to the origin of replication (oriC) to initiate formation of the DNA replication initiation complex once per cell cycle. Binds the DnaA box (a 9 base pair repeat at the origin) and separates the double-stranded (ds)DNA. Forms a right-handed helical filament on oriC DNA; dsDNA binds to the exterior of the filament while single-stranded (ss)DNA is stabiized in the filament's interior. The ATP-DnaA-oriC complex binds and stabilizes one strand of the AT-rich DNA unwinding element (DUE), permitting loading of DNA polymerase. After initiation quickly degrades to an ADP-DnaA complex that is not apt for DNA replication. Binds acidic phospholipids. This is Chromosomal replication initiator protein DnaA from Burkholderia cenocepacia (strain ATCC BAA-245 / DSM 16553 / LMG 16656 / NCTC 13227 / J2315 / CF5610) (Burkholderia cepacia (strain J2315)).